The sequence spans 612 residues: Glutamine--fructose-6-phosphate aminotransferase [isomerizing] (612 aa).

Cys2 (nucleophile; for GATase activity) is an active-site residue. Residues 2–217 form the Glutamine amidotransferase type-2 domain; sequence CGIVGGVAER…EGDIARLTRD (216 aa). SIS domains follow at residues 283–428 and 461–602; these read AEAD…VKEQ and LSEL…VDQP. The active-site For Fru-6P isomerization activity is Lys607.

Homodimer.

It is found in the cytoplasm. It carries out the reaction D-fructose 6-phosphate + L-glutamine = D-glucosamine 6-phosphate + L-glutamate. In terms of biological role, catalyzes the first step in hexosamine metabolism, converting fructose-6P into glucosamine-6P using glutamine as a nitrogen source. This Acinetobacter baylyi (strain ATCC 33305 / BD413 / ADP1) protein is Glutamine--fructose-6-phosphate aminotransferase [isomerizing].